Here is a 387-residue protein sequence, read N- to C-terminus: Succinate--CoA ligase [ADP-forming] subunit beta (387 aa).

Positions 9–244 (KRLLAEEGVP…STQQDGREIT (236 aa)) constitute an ATP-grasp domain. Residues Lys46, 53-55 (GRG), Glu99, Ser102, and Glu107 each bind ATP. The Mg(2+) site is built by Asn199 and Asp213. Residues Asn264 and 321 to 323 (GIT) each bind substrate.

The protein belongs to the succinate/malate CoA ligase beta subunit family. In terms of assembly, heterotetramer of two alpha and two beta subunits. It depends on Mg(2+) as a cofactor.

It catalyses the reaction succinate + ATP + CoA = succinyl-CoA + ADP + phosphate. The catalysed reaction is GTP + succinate + CoA = succinyl-CoA + GDP + phosphate. It participates in carbohydrate metabolism; tricarboxylic acid cycle; succinate from succinyl-CoA (ligase route): step 1/1. In terms of biological role, succinyl-CoA synthetase functions in the citric acid cycle (TCA), coupling the hydrolysis of succinyl-CoA to the synthesis of either ATP or GTP and thus represents the only step of substrate-level phosphorylation in the TCA. The beta subunit provides nucleotide specificity of the enzyme and binds the substrate succinate, while the binding sites for coenzyme A and phosphate are found in the alpha subunit. This Acidithiobacillus ferrooxidans (strain ATCC 23270 / DSM 14882 / CIP 104768 / NCIMB 8455) (Ferrobacillus ferrooxidans (strain ATCC 23270)) protein is Succinate--CoA ligase [ADP-forming] subunit beta.